The following is a 250-amino-acid chain: ATP synthase subunit a (250 aa).

5 helical membrane-spanning segments follow: residues 27-47 (TDTVLSTAIAALIVLALAFYL), 83-103 (IAPFVLPLAVTIFVFILISNW), 129-149 (INYVLALALFVFVCYHAAGIW), 191-211 (IFAGGILVALIALFPPYIMWA), and 219-239 (FDLFVGAIQAFIFALLTILYF).

Belongs to the ATPase A chain family. As to quaternary structure, F-type ATPases have 2 components, CF(1) - the catalytic core - and CF(0) - the membrane proton channel. CF(1) has five subunits: alpha(3), beta(3), gamma(1), delta(1), epsilon(1). CF(0) has three main subunits: a(1), b(2) and c(9-12). The alpha and beta chains form an alternating ring which encloses part of the gamma chain. CF(1) is attached to CF(0) by a central stalk formed by the gamma and epsilon chains, while a peripheral stalk is formed by the delta and b chains.

It localises to the cell membrane. Functionally, key component of the proton channel; it plays a direct role in the translocation of protons across the membrane. The chain is ATP synthase subunit a from Mycobacterium marinum (strain ATCC BAA-535 / M).